The sequence spans 607 residues: Elongation factor 4 (607 aa).

Positions 11–193 (EKIRNFSIIA…QIVEKVPAPQ (183 aa)) constitute a tr-type G domain. GTP-binding positions include 23-28 (DHGKST) and 140-143 (NKID).

It belongs to the TRAFAC class translation factor GTPase superfamily. Classic translation factor GTPase family. LepA subfamily.

Its subcellular location is the cell membrane. The catalysed reaction is GTP + H2O = GDP + phosphate + H(+). In terms of biological role, required for accurate and efficient protein synthesis under certain stress conditions. May act as a fidelity factor of the translation reaction, by catalyzing a one-codon backward translocation of tRNAs on improperly translocated ribosomes. Back-translocation proceeds from a post-translocation (POST) complex to a pre-translocation (PRE) complex, thus giving elongation factor G a second chance to translocate the tRNAs correctly. Binds to ribosomes in a GTP-dependent manner. The protein is Elongation factor 4 of Lactococcus lactis subsp. lactis (strain IL1403) (Streptococcus lactis).